We begin with the raw amino-acid sequence, 345 residues long: Very-long-chain 3-oxoacyl-CoA reductase (345 aa).

The chain crosses the membrane as a helical span at residues 26-46 (GAAVLLATGGLFLASRVLTFV). NADP(+) is bound by residues Val71, Asp125, Asp133, Asn152, Tyr219, Lys223, Ile252, and Ser254. Tyr219 serves as the catalytic Proton donor. Lys223 acts as the Lowers pKa of active site Tyr in catalysis.

This sequence belongs to the short-chain dehydrogenases/reductases (SDR) family.

The protein localises to the endoplasmic reticulum membrane. The catalysed reaction is a very-long-chain (3R)-3-hydroxyacyl-CoA + NADP(+) = a very-long-chain 3-oxoacyl-CoA + NADPH + H(+). It functions in the pathway lipid metabolism; fatty acid biosynthesis. In terms of biological role, component of the microsomal membrane bound fatty acid elongation system, which produces the 26-carbon very long-chain fatty acids (VLCFA) from palmitate. Catalyzes the reduction of the 3-ketoacyl-CoA intermediate that is formed in each cycle of fatty acid elongation. VLCFAs serve as precursors for ceramide and sphingolipids. The chain is Very-long-chain 3-oxoacyl-CoA reductase from Aspergillus clavatus (strain ATCC 1007 / CBS 513.65 / DSM 816 / NCTC 3887 / NRRL 1 / QM 1276 / 107).